The sequence spans 420 residues: D-tagatose-1,6-bisphosphate aldolase subunit GatZ (420 aa).

The protein belongs to the GatZ/KbaZ family. GatZ subfamily. Forms a complex with GatY.

It participates in carbohydrate metabolism; D-tagatose 6-phosphate degradation; D-glyceraldehyde 3-phosphate and glycerone phosphate from D-tagatose 6-phosphate: step 2/2. Component of the tagatose-1,6-bisphosphate aldolase GatYZ that is required for full activity and stability of the Y subunit. Could have a chaperone-like function for the proper and stable folding of GatY. When expressed alone, GatZ does not show any aldolase activity. Is involved in the catabolism of galactitol. The sequence is that of D-tagatose-1,6-bisphosphate aldolase subunit GatZ from Escherichia coli O6:H1 (strain CFT073 / ATCC 700928 / UPEC).